A 366-amino-acid polypeptide reads, in one-letter code: Ribosomal RNA large subunit methyltransferase M (366 aa).

S-adenosyl-L-methionine-binding positions include Ser-188, 221–224 (CPGG), Asp-240, Asp-260, and Asp-277. Catalysis depends on Lys-306, which acts as the Proton acceptor.

Belongs to the class I-like SAM-binding methyltransferase superfamily. RNA methyltransferase RlmE family. RlmM subfamily. In terms of assembly, monomer.

The protein localises to the cytoplasm. The enzyme catalyses cytidine(2498) in 23S rRNA + S-adenosyl-L-methionine = 2'-O-methylcytidine(2498) in 23S rRNA + S-adenosyl-L-homocysteine + H(+). In terms of biological role, catalyzes the 2'-O-methylation at nucleotide C2498 in 23S rRNA. In Shigella boydii serotype 4 (strain Sb227), this protein is Ribosomal RNA large subunit methyltransferase M.